A 117-amino-acid polypeptide reads, in one-letter code: Immunoglobulin heavy variable 1-84 (117 aa).

The signal sequence occupies residues 1-19 (MGWSWIFLFLLSGTAGVHC). The framework-1 stretch occupies residues 20-49 (QIQLQQSGPELVKPGASVKISCKASGYTFT). Residues 31–117 (VKPGASVKIS…EDSAVYFCAR (87 aa)) enclose the Ig-like domain. Cysteines 41 and 115 form a disulfide. The interval 50-54 (DYYIN) is complementarity-determining-1. The framework-2 stretch occupies residues 55-68 (WVKQRPGQGLEWIG). A complementarity-determining-2 region spans residues 69 to 85 (WIYPGSGNTKYNEKFKG). The segment at 86 to 117 (KATLTVDTSSSTAYMQLSSLTSEDSAVYFCAR) is framework-3.

This Mus musculus (Mouse) protein is Immunoglobulin heavy variable 1-84.